We begin with the raw amino-acid sequence, 37 residues long: Large ribosomal subunit protein bL36 (37 aa).

This sequence belongs to the bacterial ribosomal protein bL36 family.

The protein is Large ribosomal subunit protein bL36 (rpmJ) of Mycobacterium tuberculosis (strain ATCC 25618 / H37Rv).